The following is an 81-amino-acid chain: Neuronatin (81 aa).

It belongs to the neuronatin family.

May participate in the maintenance of segment identity in the hindbrain and pituitary development, and maturation or maintenance of the overall structure of the nervous system. May function as a regulatory subunit of ion channels. This Homo sapiens (Human) protein is Neuronatin (NNAT).